A 304-amino-acid chain; its full sequence is Glutaminase (304 aa).

7 residues coordinate substrate: S63, N114, E158, N165, Y189, Y240, and V258.

This sequence belongs to the glutaminase family. In terms of assembly, homotetramer.

The enzyme catalyses L-glutamine + H2O = L-glutamate + NH4(+). In Shewanella baltica (strain OS195), this protein is Glutaminase.